Reading from the N-terminus, the 355-residue chain is Phosphoserine aminotransferase (355 aa).

R41 provides a ligand contact to L-glutamate. Residues 75 to 76 (AS), W99, T147, D166, and Q189 each bind pyridoxal 5'-phosphate. K190 is subject to N6-(pyridoxal phosphate)lysine. Pyridoxal 5'-phosphate is bound at residue 231–232 (NT).

This sequence belongs to the class-V pyridoxal-phosphate-dependent aminotransferase family. SerC subfamily. Homodimer. It depends on pyridoxal 5'-phosphate as a cofactor.

It localises to the cytoplasm. It carries out the reaction O-phospho-L-serine + 2-oxoglutarate = 3-phosphooxypyruvate + L-glutamate. The enzyme catalyses 4-(phosphooxy)-L-threonine + 2-oxoglutarate = (R)-3-hydroxy-2-oxo-4-phosphooxybutanoate + L-glutamate. The protein operates within amino-acid biosynthesis; L-serine biosynthesis; L-serine from 3-phospho-D-glycerate: step 2/3. Its pathway is cofactor biosynthesis; pyridoxine 5'-phosphate biosynthesis; pyridoxine 5'-phosphate from D-erythrose 4-phosphate: step 3/5. Catalyzes the reversible conversion of 3-phosphohydroxypyruvate to phosphoserine and of 3-hydroxy-2-oxo-4-phosphonooxybutanoate to phosphohydroxythreonine. The sequence is that of Phosphoserine aminotransferase from Parabacteroides distasonis (strain ATCC 8503 / DSM 20701 / CIP 104284 / JCM 5825 / NCTC 11152).